The chain runs to 135 residues: D-ribose pyranase (135 aa).

Residue His20 is the Proton donor of the active site. Substrate contacts are provided by residues Asp28, His102, and 124–126; that span reads YSN.

The protein belongs to the RbsD / FucU family. RbsD subfamily. As to quaternary structure, homodecamer.

Its subcellular location is the cytoplasm. It carries out the reaction beta-D-ribopyranose = beta-D-ribofuranose. It functions in the pathway carbohydrate metabolism; D-ribose degradation; D-ribose 5-phosphate from beta-D-ribopyranose: step 1/2. Its function is as follows. Catalyzes the interconversion of beta-pyran and beta-furan forms of D-ribose. The polypeptide is D-ribose pyranase (Thermotoga maritima (strain ATCC 43589 / DSM 3109 / JCM 10099 / NBRC 100826 / MSB8)).